We begin with the raw amino-acid sequence, 240 residues long: Ribosomal RNA large subunit methyltransferase E (240 aa).

The span at 1–20 (MSKAGGNKGGVKTGGRGGAG) shows a compositional bias: gly residues. Residues 1 to 27 (MSKAGGNKGGVKTGGRGGAGSSNLQVR) are disordered. Glycine 92, tryptophan 94, aspartate 115, aspartate 131, and aspartate 155 together coordinate S-adenosyl-L-methionine. The Proton acceptor role is filled by lysine 195.

The protein belongs to the class I-like SAM-binding methyltransferase superfamily. RNA methyltransferase RlmE family.

The protein resides in the cytoplasm. It carries out the reaction uridine(2552) in 23S rRNA + S-adenosyl-L-methionine = 2'-O-methyluridine(2552) in 23S rRNA + S-adenosyl-L-homocysteine + H(+). In terms of biological role, specifically methylates the uridine in position 2552 of 23S rRNA at the 2'-O position of the ribose in the fully assembled 50S ribosomal subunit. The polypeptide is Ribosomal RNA large subunit methyltransferase E (Brucella anthropi (strain ATCC 49188 / DSM 6882 / CCUG 24695 / JCM 21032 / LMG 3331 / NBRC 15819 / NCTC 12168 / Alc 37) (Ochrobactrum anthropi)).